We begin with the raw amino-acid sequence, 241 residues long: Proteasome subunit alpha (241 aa).

The protein belongs to the peptidase T1A family. The 20S proteasome core is composed of 14 alpha and 14 beta subunits that assemble into four stacked heptameric rings, resulting in a barrel-shaped structure. The two inner rings, each composed of seven catalytic beta subunits, are sandwiched by two outer rings, each composed of seven alpha subunits. The catalytic chamber with the active sites is on the inside of the barrel. Has a gated structure, the ends of the cylinder being occluded by the N-termini of the alpha-subunits. Is capped at one or both ends by the proteasome regulatory ATPase, PAN.

The protein localises to the cytoplasm. The formation of the proteasomal ATPase PAN-20S proteasome complex, via the docking of the C-termini of PAN into the intersubunit pockets in the alpha-rings, triggers opening of the gate for substrate entry. Interconversion between the open-gate and close-gate conformations leads to a dynamic regulation of the 20S proteasome proteolysis activity. Functionally, component of the proteasome core, a large protease complex with broad specificity involved in protein degradation. The polypeptide is Proteasome subunit alpha (Saccharolobus islandicus (strain M.16.4 / Kamchatka #3) (Sulfolobus islandicus)).